We begin with the raw amino-acid sequence, 559 residues long: Polypeptide N-acetylgalactosaminyltransferase 1 (559 aa).

At 1–8 (MRKFAYCK) the chain is on the cytoplasmic side. A helical; Signal-anchor for type II membrane protein transmembrane segment spans residues 9–28 (VVLATSLIWVLLDMFLLLYF). Over 29-559 (SECNKCDEKK…LRNVTLPEIF (531 aa)) the chain is Lumenal. Residues 45 to 66 (GDVLEPVQKPHEGPGEMGKPVV) are disordered. N-linked (GlcNAc...) asparagine glycosylation is present at Asn95. Intrachain disulfides connect Cys106/Cys339, Cys330/Cys408, Cys442/Cys459, Cys482/Cys497, and Cys523/Cys540. Residues 115–225 (LPTTSVVIVF…VGWLEPLLAR (111 aa)) form a catalytic subdomain A region. Substrate is bound by residues Asp156 and Arg186. Mn(2+) is bound by residues Asp209 and His211. The segment at 285–347 (PVRTPTMAGG…TCSHVGHVFR (63 aa)) is catalytic subdomain B. Trp316 is a binding site for substrate. Residue His344 participates in Mn(2+) binding. Positions 347 and 352 each coordinate substrate. In terms of domain architecture, Ricin B-type lectin spans 429-551 (SSLGEIRNVE…GSRSQQWLLR (123 aa)). A glycan (N-linked (GlcNAc...) asparagine) is linked at Asn552.

Belongs to the glycosyltransferase 2 family. GalNAc-T subfamily. Requires Mn(2+) as cofactor.

It localises to the golgi apparatus. Its subcellular location is the golgi stack membrane. It is found in the secreted. It catalyses the reaction L-seryl-[protein] + UDP-N-acetyl-alpha-D-galactosamine = a 3-O-[N-acetyl-alpha-D-galactosaminyl]-L-seryl-[protein] + UDP + H(+). The catalysed reaction is L-threonyl-[protein] + UDP-N-acetyl-alpha-D-galactosamine = a 3-O-[N-acetyl-alpha-D-galactosaminyl]-L-threonyl-[protein] + UDP + H(+). It functions in the pathway protein modification; protein glycosylation. Catalyzes the initial reaction in O-linked oligosaccharide biosynthesis, the transfer of an N-acetyl-D-galactosamine residue to a serine or threonine residue on the protein receptor. Has a broad spectrum of substrates such as apomucin-, MUC5AC-, MUC1- and MUC2-derived peptides. This is Polypeptide N-acetylgalactosaminyltransferase 1 from Sus scrofa (Pig).